We begin with the raw amino-acid sequence, 134 residues long: Profilin-2 (134 aa).

Residues Cys13 and Cys118 are joined by a disulfide bond. An Involved in PIP2 interaction motif is present at residues 84 to 100; the sequence is AVIRGKKGSGGITIKKT. Residue Thr114 is modified to Phosphothreonine.

It belongs to the profilin family. Occurs in many kinds of cells as a complex with monomeric actin in a 1:1 ratio. Post-translationally, phosphorylated by MAP kinases.

Its subcellular location is the cytoplasm. It is found in the cytoskeleton. Its function is as follows. Binds to actin and affects the structure of the cytoskeleton. At high concentrations, profilin prevents the polymerization of actin, whereas it enhances it at low concentrations. This Olea europaea (Common olive) protein is Profilin-2.